Here is a 364-residue protein sequence, read N- to C-terminus: sn-glycerol-3-phosphate import ATP-binding protein UgpC (364 aa).

The ABC transporter domain maps to 4–235 (VVLRNVRKTY…PATTFVASFI (232 aa)). 37-44 (GPSGCGKS) is a binding site for ATP.

This sequence belongs to the ABC transporter superfamily. sn-glycerol-3-phosphate importer (TC 3.A.1.1.3) family. The complex is composed of two ATP-binding proteins (UgpC), two transmembrane proteins (UgpA and UgpE) and a solute-binding protein (UgpB).

The protein localises to the cell inner membrane. The enzyme catalyses sn-glycerol 3-phosphate(out) + ATP + H2O = sn-glycerol 3-phosphate(in) + ADP + phosphate + H(+). Part of the ABC transporter complex UgpBAEC involved in sn-glycerol-3-phosphate (G3P) import. Responsible for energy coupling to the transport system. The protein is sn-glycerol-3-phosphate import ATP-binding protein UgpC of Rhodopseudomonas palustris (strain BisB5).